The chain runs to 465 residues: GDNF family receptor alpha-1 (465 aa).

The N-terminal stretch at 1-24 (MFLATLYFALPLLDLLLSAEVSGG) is a signal peptide. A run of 3 repeats spans residues 25–113 (DRLD…LQGN), 150–238 (KGNN…YEER), and 239–342 (EKPN…KNAI). A disulfide bridge links Cys36 with Cys42. Asn59 carries an N-linked (GlcNAc...) asparagine glycan. Intrachain disulfides connect Cys154–Cys214, Cys161–Cys167, Cys178–Cys192, Cys187–Cys233, Cys216–Cys221, Cys243–Cys313, Cys250–Cys256, Cys267–Cys285, Cys277–Cys337, and Cys315–Cys325. Residues Asn347 and Asn406 are each glycosylated (N-linked (GlcNAc...) asparagine). The GPI-anchor amidated serine moiety is linked to residue Ser429. The propeptide at 430 to 465 (HITTKSMAAPPSCGLSPLLVLVVTALSTLLSLTETS) is removed in mature form.

This sequence belongs to the GDNFR family. As to quaternary structure, interacts with GDNF ligand and RET: forms a 2:2:2 ternary complex composed of GDNF ligand, GFRA1 and RET receptor. Interacts with SORL1, either alone or in complex with GDNF. Interaction between SORL1 and GFRA1 leads to GFRA1 internalization, but not degradation.

The protein resides in the cell membrane. The protein localises to the golgi apparatus. Its subcellular location is the trans-Golgi network. It localises to the endosome. It is found in the multivesicular body. Functionally, coreceptor for GDNF, a neurotrophic factor that enhances survival and morphological differentiation of dopaminergic neurons and increases their high-affinity dopamine uptake. GDNF-binding leads to autophosphorylation and activation of the RET receptor. In Homo sapiens (Human), this protein is GDNF family receptor alpha-1 (GFRA1).